A 188-amino-acid chain; its full sequence is V-type proton ATPase subunit E (188 aa).

Belongs to the V-ATPase E subunit family.

Functionally, produces ATP from ADP in the presence of a proton gradient across the membrane. In Dictyoglomus thermophilum (strain ATCC 35947 / DSM 3960 / H-6-12), this protein is V-type proton ATPase subunit E.